The chain runs to 159 residues: 17.7 kDa class I heat shock protein (159 aa).

A sHSP domain is found at 45–159; the sequence is DAAAFAGARI…PDVKSIQISG (115 aa).

The protein belongs to the small heat shock protein (HSP20) family. As to quaternary structure, may form oligomeric structures.

It is found in the cytoplasm. In Oryza sativa subsp. japonica (Rice), this protein is 17.7 kDa class I heat shock protein (HSP17.7).